An 80-amino-acid chain; its full sequence is Acyl carrier protein (80 aa).

The 76-residue stretch at 2-77 folds into the Carrier domain; that stretch reads KNIEERIKKI…KSIDFIQNKN (76 aa). Ser-37 bears the O-(pantetheine 4'-phosphoryl)serine mark.

The protein belongs to the acyl carrier protein (ACP) family. Post-translationally, 4'-phosphopantetheine is transferred from CoA to a specific serine of apo-ACP by AcpS. This modification is essential for activity because fatty acids are bound in thioester linkage to the sulfhydryl of the prosthetic group.

It is found in the cytoplasm. It functions in the pathway lipid metabolism; fatty acid biosynthesis. Its function is as follows. Carrier of the growing fatty acid chain in fatty acid biosynthesis. The polypeptide is Acyl carrier protein (Buchnera aphidicola subsp. Acyrthosiphon pisum (strain 5A)).